A 267-amino-acid polypeptide reads, in one-letter code: Regulatory protein RecX (267 aa).

It belongs to the RecX family.

It localises to the cytoplasm. Modulates RecA activity. This Staphylococcus carnosus (strain TM300) protein is Regulatory protein RecX.